The primary structure comprises 368 residues: Proline-rich protein 5-like (368 aa).

Residue serine 28 is modified to Phosphoserine. Positions 327–368 are disordered; the sequence is PSFPPPHRQCSSEPNITDNPDGLEEGARGSQEGSELNCASLS. Polar residues-rich tracts occupy residues 335–344 and 357–368; these read QCSSEPNITD and QEGSELNCASLS.

Belongs to the PROTOR family. In terms of assembly, interacts with the mammalian target of rapamycin complex 2 (mTORC2) which contains MTOR, MLST8, PRR5, RICTOR, MAPKAP1 and DEPTOR. Interacts with RFFL. Interacts (via C-terminus) with ZFP36 (via C-terminus); this interaction may accelerate ZFP36-mediated mRNA decay during stress. Interacts with RICTOR. Ubiquitinated. Ubiquitination by RFFL promotes proteasomal degradation of PRR5L thereby modifying the substrate-specific activity of the mTORC2 complex. Ubiquitination by RFFL is stimulated by LPA/lysophosphatidic acid.

Associates with the mTORC2 complex that regulates cellular processes including survival and organization of the cytoskeleton. Regulates the activity of the mTORC2 complex in a substrate-specific manner preventing for instance the specific phosphorylation of PKCs and thereby controlling cell migration. Plays a role in the stimulation of ZFP36-mediated mRNA decay of several ZFP36-associated mRNAs, such as TNF-alpha and GM-CSF, in response to stress. Required for ZFP36 localization to cytoplasmic stress granule (SG) and P-body (PB) in response to stress. This chain is Proline-rich protein 5-like (PRR5L), found in Homo sapiens (Human).